Reading from the N-terminus, the 317-residue chain is Probable deoxyhypusine synthase 1 (317 aa).

K285 (nucleophile) is an active-site residue.

Belongs to the deoxyhypusine synthase family. NAD(+) serves as cofactor.

The enzyme catalyses [eIF5A protein]-L-lysine + spermidine = [eIF5A protein]-deoxyhypusine + propane-1,3-diamine. Its pathway is protein modification; eIF5A hypusination. Functionally, catalyzes the NAD-dependent oxidative cleavage of spermidine and the subsequent transfer of the butylamine moiety of spermidine to the epsilon-amino group of a specific lysine residue of the eIF-5A precursor protein to form the intermediate deoxyhypusine residue. This chain is Probable deoxyhypusine synthase 1 (dys1), found in Methanosarcina acetivorans (strain ATCC 35395 / DSM 2834 / JCM 12185 / C2A).